The sequence spans 418 residues: Geranylgeranyl pyrophosphate synthase (418 aa).

The span at 51–64 (TSSTGIPTSLNATP) shows a compositional bias: polar residues. A disordered region spans residues 51-73 (TSSTGIPTSLNATPTKPVLRPVP). Residues K143, R146, and H175 each coordinate isopentenyl diphosphate. Mg(2+)-binding residues include D182 and D186. R191 provides a ligand contact to dimethylallyl diphosphate. Residue R192 coordinates isopentenyl diphosphate. Residues K269, T270, Q305, K322, and K332 each contribute to the dimethylallyl diphosphate site.

It belongs to the FPP/GGPP synthase family. Requires Mg(2+) as cofactor.

It is found in the cytoplasm. It catalyses the reaction isopentenyl diphosphate + dimethylallyl diphosphate = (2E)-geranyl diphosphate + diphosphate. It carries out the reaction isopentenyl diphosphate + (2E)-geranyl diphosphate = (2E,6E)-farnesyl diphosphate + diphosphate. The catalysed reaction is isopentenyl diphosphate + (2E,6E)-farnesyl diphosphate = (2E,6E,10E)-geranylgeranyl diphosphate + diphosphate. The protein operates within isoprenoid biosynthesis; farnesyl diphosphate biosynthesis; farnesyl diphosphate from geranyl diphosphate and isopentenyl diphosphate: step 1/1. Its pathway is isoprenoid biosynthesis; geranyl diphosphate biosynthesis; geranyl diphosphate from dimethylallyl diphosphate and isopentenyl diphosphate: step 1/1. It participates in isoprenoid biosynthesis; geranylgeranyl diphosphate biosynthesis; geranylgeranyl diphosphate from farnesyl diphosphate and isopentenyl diphosphate: step 1/1. Functionally, catalyzes the trans-addition of the three molecules of IPP onto DMAPP to form geranylgeranyl pyrophosphate. The polypeptide is Geranylgeranyl pyrophosphate synthase (GGS) (Fusarium fujikuroi (Bakanae and foot rot disease fungus)).